The primary structure comprises 432 residues: Adenylosuccinate synthetase (432 aa).

GTP is bound by residues 12–18 and 40–42; these read GDEGKGK and GHT. D13 functions as the Proton acceptor in the catalytic mechanism. Mg(2+)-binding residues include D13 and G40. Residues 13–16, 38–41, T132, R146, Q226, T241, and R305 contribute to the IMP site; these read DEGK and NAGH. H41 functions as the Proton donor in the catalytic mechanism. 301 to 307 contacts substrate; sequence TVTGRKR. GTP is bound by residues R307, 333–335, and 415–417; these read KLD and STS.

The protein belongs to the adenylosuccinate synthetase family. In terms of assembly, homodimer. Requires Mg(2+) as cofactor.

The protein resides in the cytoplasm. The enzyme catalyses IMP + L-aspartate + GTP = N(6)-(1,2-dicarboxyethyl)-AMP + GDP + phosphate + 2 H(+). It functions in the pathway purine metabolism; AMP biosynthesis via de novo pathway; AMP from IMP: step 1/2. Its function is as follows. Plays an important role in the de novo pathway of purine nucleotide biosynthesis. Catalyzes the first committed step in the biosynthesis of AMP from IMP. This Chelativorans sp. (strain BNC1) protein is Adenylosuccinate synthetase.